The primary structure comprises 885 residues: Translation initiation factor IF-2 (885 aa).

Residues 123 to 232 (ETEAKAKAEA…EAERYSDHHI (110 aa)) are compositionally biased toward basic and acidic residues. The tract at residues 123–289 (ETEAKAKAEA…RNRSTAPESM (167 aa)) is disordered. Basic residues predominate over residues 253–266 (GRRARNKNTAKTKR). Basic and acidic residues predominate over residues 267–276 (GGKDARDGRE). The tr-type G domain occupies 385-554 (PRAPVVTIMG…LLQAEVLELK (170 aa)). The interval 394–401 (GHVDHGKT) is G1. Residue 394-401 (GHVDHGKT) participates in GTP binding. The segment at 419–423 (GITQH) is G2. The interval 440 to 443 (DTPG) is G3. Residues 440–444 (DTPGH) and 494–497 (NKMD) contribute to the GTP site. The interval 494 to 497 (NKMD) is G4. Residues 530 to 532 (SAK) form a G5 region.

This sequence belongs to the TRAFAC class translation factor GTPase superfamily. Classic translation factor GTPase family. IF-2 subfamily.

It localises to the cytoplasm. One of the essential components for the initiation of protein synthesis. Protects formylmethionyl-tRNA from spontaneous hydrolysis and promotes its binding to the 30S ribosomal subunits. Also involved in the hydrolysis of GTP during the formation of the 70S ribosomal complex. The chain is Translation initiation factor IF-2 from Shewanella oneidensis (strain ATCC 700550 / JCM 31522 / CIP 106686 / LMG 19005 / NCIMB 14063 / MR-1).